Reading from the N-terminus, the 860-residue chain is DNA mismatch repair protein MutS (860 aa).

607 to 614 lines the ATP pocket; the sequence is GPNMSGKS.

It belongs to the DNA mismatch repair MutS family.

Its function is as follows. This protein is involved in the repair of mismatches in DNA. It is possible that it carries out the mismatch recognition step. This protein has a weak ATPase activity. In Listeria monocytogenes serotype 4a (strain HCC23), this protein is DNA mismatch repair protein MutS.